A 520-amino-acid chain; its full sequence is Erythritol kinase (520 aa).

The protein belongs to the FGGY kinase family.

The catalysed reaction is erythritol + ATP = D-erythritol 1-phosphate + ADP + H(+). Its pathway is carbohydrate metabolism; erythritol degradation. Catalyzes the phosphorylation of erythritol to D-erythritol-1-phosphate. In Brucella abortus (strain 2308), this protein is Erythritol kinase.